An 889-amino-acid polypeptide reads, in one-letter code: Inter-alpha-trypsin inhibitor heavy chain H3 (889 aa).

Residues 1–21 form the signal peptide; that stretch reads MRTMWWPCLVLALLSGLETSG. The propeptide occupies 22–33; that stretch reads FPRSPLQLLGKR. A VIT domain is found at 29–158; the sequence is LLGKRSLPEG…KVTFELTYEE (130 aa). Asn-91 carries an N-linked (GlcNAc...) asparagine glycan. Residues 284–467 enclose the VWFA domain; that stretch reads NIVFVIDVSG…LQLQGFYEEV (184 aa). N-linked (GlcNAc...) asparagine glycosylation occurs at Asn-580. Asp-649 is modified (aspartate 1-(chondroitin 4-sulfate)-ester). Positions 650-889 are excised as a propeptide; sequence PHFIIQIPGK…HTDYIVPSLF (240 aa).

The protein belongs to the ITIH family. As to quaternary structure, I-alpha-I plasma protease inhibitors are assembled from one or two heavy chains (HC) and one light chain, bikunin. Pre-alpha-inhibitor (P-alpha-I) is composed of ITIH3/HC3 and bikunin. Post-translationally, heavy chains are linked to bikunin via chondroitin 4-sulfate esterified to the alpha-carboxyl of the C-terminal aspartate after propeptide cleavage. In terms of tissue distribution, expressed in both liver and brain.

It localises to the secreted. May act as a carrier of hyaluronan in serum or as a binding protein between hyaluronan and other matrix protein, including those on cell surfaces in tissues to regulate the localization, synthesis and degradation of hyaluronan which are essential to cells undergoing biological processes. This Mus musculus (Mouse) protein is Inter-alpha-trypsin inhibitor heavy chain H3 (Itih3).